The following is an 87-amino-acid chain: Acyl-CoA-binding protein (87 aa).

Ser2 carries the post-translational modification N-acetylserine. An ACB domain is found at 2–87 (SQADFDKAAE…VEELKKKYGI (86 aa)). The residue at position 8 (Lys8) is an N6-acetyllysine; alternate. At Lys8 the chain carries N6-succinyllysine; alternate. An acyl-CoA is bound at residue Lys14. Lys17 is subject to N6-succinyllysine. Tyr29 carries the phosphotyrosine modification. Residues 29–33 (YSHFK), Lys51, Lys55, and Tyr74 contribute to the an acyl-CoA site. Position 51 is an N6-acetyllysine (Lys51). Residue Lys55 is modified to N6-acetyllysine; alternate. N6-succinyllysine; alternate is present on Lys55. Position 55 is an N6-(2-hydroxyisobutyryl)lysine; alternate (Lys55). Position 55 is an N6-malonyllysine; alternate (Lys55). Lys77 bears the N6-acetyllysine; alternate mark. Lys77 is subject to N6-succinyllysine; alternate.

This sequence belongs to the ACBP family. In terms of assembly, monomer.

Its subcellular location is the endoplasmic reticulum. It localises to the golgi apparatus. Functionally, binds medium- and long-chain acyl-CoA esters with very high affinity and may function as an intracellular carrier of acyl-CoA esters. It is also able to displace diazepam from the benzodiazepine (BZD) recognition site located on the GABA type A receptor. It is therefore possible that this protein also acts as a neuropeptide to modulate the action of the GABA receptor. This is Acyl-CoA-binding protein (Dbi) from Rattus norvegicus (Rat).